The primary structure comprises 342 residues: Holliday junction branch migration complex subunit RuvB (342 aa).

The segment at 1–22 (MTLKPVREVSPGSQEGEERLEQ) is disordered. Residues 1-185 (MTLKPVREVS…FPIQERLGYY (185 aa)) form a large ATPase domain (RuvB-L) region. ATP is bound by residues Leu-24, Arg-25, Gly-66, Lys-69, Thr-70, Ser-71, 132–134 (EDY), Arg-175, Tyr-185, and Arg-222. Thr-70 contributes to the Mg(2+) binding site. The interval 186-256 (EPTELREIAV…IVETTLERLE (71 aa)) is small ATPAse domain (RuvB-S). The segment at 259–342 (GRGLDAMDRR…RPQGKQGSLI (84 aa)) is head domain (RuvB-H). DNA contacts are provided by Arg-295, Arg-314, and Arg-319.

This sequence belongs to the RuvB family. As to quaternary structure, homohexamer. Forms an RuvA(8)-RuvB(12)-Holliday junction (HJ) complex. HJ DNA is sandwiched between 2 RuvA tetramers; dsDNA enters through RuvA and exits via RuvB. An RuvB hexamer assembles on each DNA strand where it exits the tetramer. Each RuvB hexamer is contacted by two RuvA subunits (via domain III) on 2 adjacent RuvB subunits; this complex drives branch migration. In the full resolvosome a probable DNA-RuvA(4)-RuvB(12)-RuvC(2) complex forms which resolves the HJ.

Its subcellular location is the cytoplasm. It carries out the reaction ATP + H2O = ADP + phosphate + H(+). Its function is as follows. The RuvA-RuvB-RuvC complex processes Holliday junction (HJ) DNA during genetic recombination and DNA repair, while the RuvA-RuvB complex plays an important role in the rescue of blocked DNA replication forks via replication fork reversal (RFR). RuvA specifically binds to HJ cruciform DNA, conferring on it an open structure. The RuvB hexamer acts as an ATP-dependent pump, pulling dsDNA into and through the RuvAB complex. RuvB forms 2 homohexamers on either side of HJ DNA bound by 1 or 2 RuvA tetramers; 4 subunits per hexamer contact DNA at a time. Coordinated motions by a converter formed by DNA-disengaged RuvB subunits stimulates ATP hydrolysis and nucleotide exchange. Immobilization of the converter enables RuvB to convert the ATP-contained energy into a lever motion, pulling 2 nucleotides of DNA out of the RuvA tetramer per ATP hydrolyzed, thus driving DNA branch migration. The RuvB motors rotate together with the DNA substrate, which together with the progressing nucleotide cycle form the mechanistic basis for DNA recombination by continuous HJ branch migration. Branch migration allows RuvC to scan DNA until it finds its consensus sequence, where it cleaves and resolves cruciform DNA. This Anaeromyxobacter sp. (strain Fw109-5) protein is Holliday junction branch migration complex subunit RuvB.